The following is a 257-amino-acid chain: Thiazole synthase (257 aa).

The Schiff-base intermediate with DXP role is filled by Lys96. Residues Gly157, 184 to 185 (AG), and 206 to 207 (NT) each bind 1-deoxy-D-xylulose 5-phosphate.

It belongs to the ThiG family. As to quaternary structure, homotetramer. Forms heterodimers with either ThiH or ThiS.

Its subcellular location is the cytoplasm. It catalyses the reaction [ThiS sulfur-carrier protein]-C-terminal-Gly-aminoethanethioate + 2-iminoacetate + 1-deoxy-D-xylulose 5-phosphate = [ThiS sulfur-carrier protein]-C-terminal Gly-Gly + 2-[(2R,5Z)-2-carboxy-4-methylthiazol-5(2H)-ylidene]ethyl phosphate + 2 H2O + H(+). It functions in the pathway cofactor biosynthesis; thiamine diphosphate biosynthesis. In terms of biological role, catalyzes the rearrangement of 1-deoxy-D-xylulose 5-phosphate (DXP) to produce the thiazole phosphate moiety of thiamine. Sulfur is provided by the thiocarboxylate moiety of the carrier protein ThiS. In vitro, sulfur can be provided by H(2)S. The chain is Thiazole synthase from Agrobacterium fabrum (strain C58 / ATCC 33970) (Agrobacterium tumefaciens (strain C58)).